Reading from the N-terminus, the 433-residue chain is MADTRGSTSSGGGDDRGREGHDDFTGGGQYNRYHRILEAVPSPLVRRENGVHHQYPTGLIHHPSSTMPVAPCSYVPRYTMVPTSAMLPLQHHHRQLQISQENFQDRVPSNNVAAPHLPSNFQDLRPMCNGPPFMSYGQTASNRNVLYQNLTPYSFNAWASNNMPRNPVYTSYHPTAIEDPHATPFHINNHDTDQGFFTVSTSFRVDQSFVHAPSPFPPVSSSSRSFSSAQISNGPIDAKKAKKSDIKDQPIVLRRSDTESEKNDELDQTPASEPSSMSHNSANSTIRFNCREYRVILRKELTNSDVGNIGRIVMPKRDAEAHLPALHQREGVMLKMDDFKLETTWNFKYRFWPNNKSRMYVLESTGGFVKQHGLQTGDIFIIYKSSESEKLVVRGEKAIKPNVIMPIVDCSCKNDLNNSEECGFAISLLTKKT.

2 disordered regions span residues 1–29 (MADT…GGGQ) and 216–283 (FPPV…NSAN). The span at 13–24 (GDDRGREGHDDF) shows a compositional bias: basic and acidic residues. Low complexity predominate over residues 216-229 (FPPVSSSSRSFSSA). Over residues 237-265 (DAKKAKKSDIKDQPIVLRRSDTESEKNDE) the composition is skewed to basic and acidic residues. Residues 269-283 (TPASEPSSMSHNSAN) show a composition bias toward polar residues. The segment at residues 297-399 (LRKELTNSDV…KLVVRGEKAI (103 aa)) is a DNA-binding region (TF-B3).

Its subcellular location is the nucleus. Functionally, probable transcription regulator that binds specifically to the DNA sequence 5'-CATGC-3' of the IDE1 element found in the promoter of the barley iron deficiency-inducible gene IDS2. In Oryza sativa subsp. japonica (Rice), this protein is B3 domain-containing protein Os04g0676600.